The chain runs to 1013 residues: Retinoblastoma-related protein 1 (1013 aa).

The tract at residues 406–607 (TPVSTAMTTA…EKGSSMYNSL (202 aa)) is domain A. The interval 406–858 (TPVSTAMTTA…NEIFIPAVKP (453 aa)) is pocket. Residues 608–727 (IVARPSLALE…PGGGGETCAE (120 aa)) form a spacer region. The domain B stretch occupies residues 728–858 (TGINIFFTKI…NEIFIPAVKP (131 aa)). Phosphoserine is present on residues Ser885 and Ser898. A disordered region spans residues 979 to 1013 (VANSLNLQNQNQNQNGSDASSSGGAAPLKTEPTDS). Positions 980 to 1004 (ANSLNLQNQNQNQNGSDASSSGGAA) are enriched in low complexity.

Belongs to the retinoblastoma protein (RB) family. In terms of assembly, interacts with the begomovirus replication-associated protein (Rep), the nanovirus Clink protein, the mastrevirus RepA protein, E2FA, E2FB and E2FC. Interacts with MSI1 through its Domain A. Interacts with ATPK1/S6K1. Interacts with SCR. Interacts with HAT2. Interacts with FAMA. Interacts with MYB124 and MYB88. Component of a DREAM-like complex which modulates a variety of developmentally regulated genes and of the mitotic genes in proliferating and differentiated cells. Associates with MYB3R3 in both earlier and later stages of leaves development. Interacts with MYB3R4 only at early stages of leaves development. In terms of processing, highly phosphorylated by CDKA-1 during G1 to S phase transition. Once hyper-phosphorylated, becomes inactive and unable to interact with E2F. Post-translationally, ubiquitinated. Subject to proteasome-dependent degradation during sucrose starvation. As to expression, expressed in actively dividing cells. Detected in the shoot apical meristem, in young leaf primordia and in both sporophytic tissue and the megagametophyte.

Its subcellular location is the nucleus. In terms of biological role, key regulator of entry into cell division. Acts as a transcription repressor of E2F target genes, whose activity is required for progress from the G1 to the S phase of the cell cycle. Hyperphosphorylation by CDKA-1 prevents the binding to E2F transcription factors, allowing G1 to S phase transition to operate. Forms a stable complex with E2FA that functions in maintaining cell proliferation through repression of cell differentiation. Plays a central role in the mechanism controlling meristem cell differentiation, cell fate establishment and cell fate maintenance during organogenesis and gametogenesis. Required during lateral organ production. Also involved in controlling asymmetric divisions of stem cells in different stem cell niches. Acts as a negative regulator of cell proliferation during leaf and gametophytes development. At later stages of development, restricts the progression through additional endocycles. In the leaf, plays a role in the control of the mesophyll differentiation. Another role is its implication in the regulation of imprinted genes. Acts together with MSI1 to repress the expression of MET1 during gametogenesis. This in turn activates expression of the imprinted genes FIS2 and FWA. Regulates many genes of the polycomb repressive complex 2 (PRC2). Plays an important role in meiosis affecting different aspects of this complex process. Functions as a positive regulator of the developmental switch from embryonic heterotrophic growth to autotrophic growth. Interaction with mastrevirus RepA or nanovirus Clink protein disrupts the RBR/E2F interaction and releases the transcription of replicative enzymes needed by the virus by increasing the E2F DNA-binding activity. The protein is Retinoblastoma-related protein 1 (RBR1) of Arabidopsis thaliana (Mouse-ear cress).